The chain runs to 242 residues: Biosynthetic peptidoglycan transglycosylase (242 aa).

A helical transmembrane segment spans residues 19 to 39 (ILAALAVFWGGGIALFSVVPV).

The protein belongs to the glycosyltransferase 51 family.

It is found in the cell inner membrane. The enzyme catalyses [GlcNAc-(1-&gt;4)-Mur2Ac(oyl-L-Ala-gamma-D-Glu-L-Lys-D-Ala-D-Ala)](n)-di-trans,octa-cis-undecaprenyl diphosphate + beta-D-GlcNAc-(1-&gt;4)-Mur2Ac(oyl-L-Ala-gamma-D-Glu-L-Lys-D-Ala-D-Ala)-di-trans,octa-cis-undecaprenyl diphosphate = [GlcNAc-(1-&gt;4)-Mur2Ac(oyl-L-Ala-gamma-D-Glu-L-Lys-D-Ala-D-Ala)](n+1)-di-trans,octa-cis-undecaprenyl diphosphate + di-trans,octa-cis-undecaprenyl diphosphate + H(+). The protein operates within cell wall biogenesis; peptidoglycan biosynthesis. Its function is as follows. Peptidoglycan polymerase that catalyzes glycan chain elongation from lipid-linked precursors. The polypeptide is Biosynthetic peptidoglycan transglycosylase (Salmonella paratyphi A (strain ATCC 9150 / SARB42)).